Consider the following 238-residue polypeptide: Protein-lysine N-methyltransferase efm4 (238 aa).

This sequence belongs to the class I-like SAM-binding methyltransferase superfamily. EFM4 family.

It is found in the cytoplasm. The protein resides in the nucleus. Functionally, S-adenosyl-L-methionine-dependent protein-lysine N-methyltransferase that mono- and dimethylates elongation factor 1-alpha at 'Lys-316'. May play a role in intracellular transport. The protein is Protein-lysine N-methyltransferase efm4 of Schizosaccharomyces pombe (strain 972 / ATCC 24843) (Fission yeast).